The chain runs to 172 residues: Translation initiation factor IF-3 (172 aa).

The protein belongs to the IF-3 family. In terms of assembly, monomer.

Its subcellular location is the cytoplasm. IF-3 binds to the 30S ribosomal subunit and shifts the equilibrium between 70S ribosomes and their 50S and 30S subunits in favor of the free subunits, thus enhancing the availability of 30S subunits on which protein synthesis initiation begins. The sequence is that of Translation initiation factor IF-3 from Geobacter sulfurreducens (strain ATCC 51573 / DSM 12127 / PCA).